The following is a 775-amino-acid chain: Subtilisin-like protease SBT4.1 (775 aa).

A signal peptide spans M1–A23. The N-linked (GlcNAc...) asparagine glycan is linked to N24. Positions N24–Q106 are cleaved as a propeptide — activation peptide. The 77-residue stretch at T29–L105 folds into the Inhibitor I9 domain. One can recognise a Peptidase S8 domain in the interval S110 to R606. 2 N-linked (GlcNAc...) asparagine glycosylation sites follow: N115 and N126. Residue D136 is the Charge relay system of the active site. Residue N162 is glycosylated (N-linked (GlcNAc...) asparagine). H196 (charge relay system) is an active-site residue. In terms of domain architecture, PA spans F365–L459. N-linked (GlcNAc...) asparagine glycosylation occurs at N437. Catalysis depends on S551, which acts as the Charge relay system. The N-linked (GlcNAc...) asparagine glycan is linked to N601.

The protein belongs to the peptidase S8 family. Post-translationally, the C-terminal propeptide is autocleaved.

The protein localises to the secreted. This chain is Subtilisin-like protease SBT4.1, found in Arabidopsis thaliana (Mouse-ear cress).